The primary structure comprises 288 residues: Programmed cell death protein 1 (288 aa).

A signal peptide spans 1–24 (MWVRQVPWSFTWAVLQLSWQSGWL). Over 25-169 (LEVPNGPWRS…PKPEGRFQGM (145 aa)) the chain is Extracellular. The Ig-like V-type domain occupies 31–139 (PWRSLTFYPA…PKAKIEESPG (109 aa)). Residues Asn49, Asn58, Asn74, and Asn116 are each glycosylated (N-linked (GlcNAc...) asparagine). A disulfide bridge links Cys54 with Cys123. Positions 70 to 77 (LSPSNQTE) are interaction with CD274/PDCD1L1. Residues 170 to 190 (VIGIMSALVGIPVLLLLAWAL) form a helical membrane-spanning segment. The Cytoplasmic portion of the chain corresponds to 191 to 288 (AVFCSTSMSE…HEDGHCSWPL (98 aa)). The ITIM motif signature appears at 223 to 228 (VAYEEL). A Phosphotyrosine modification is found at Tyr225. Lys235 participates in a covalent cross-link: Glycyl lysine isopeptide (Lys-Gly) (interchain with G-Cter in ubiquitin). Thr236 is subject to Phosphothreonine; by MAPK3. An ITSM motif motif is present at residues 247 to 251 (EYATI). Tyr248 carries the phosphotyrosine modification. Positions 263–288 (GRRGSADGLQGPRPPRHEDGHCSWPL) are disordered. Residues 277-288 (PRHEDGHCSWPL) are compositionally biased toward basic and acidic residues.

Monomer. Interacts with CD274/PDCD1L1. Interacts with CD273/PDCD1LG2. Interacts with FBXO38; leading to ubiquitination and degradation by the proteasome. In terms of processing, ubiquitinated at Lys-235 by the SCF(FBXO38) complex, leading to its proteasomal degradation. Ubiquitinated via 'Lys-48'-linked polyubiquitin chains. Deubiquitinated and thus stabilized by USP5. Tyrosine phosphorylated at Tyr-225 (within ITIM motif) and Tyr-248 (ITSM motif) upon ligand binding. Phosphorylation at Tyr-248 promotes the recruitment of the protein tyrosine phosphatase PTPN11/SHP-2 that mediates dephosphorylation of key TCR proximal signaling molecules, such as ZAP70, PRKCQ/PKCtheta and CD247/CD3zeta. Phosphorylation at Thr-236 promotes the recruitment of the deubiquitinase USP5. Thymus-specific.

It localises to the cell membrane. Its function is as follows. Inhibitory receptor on antigen activated T-cells that plays a critical role in induction and maintenance of immune tolerance to self. Delivers inhibitory signals upon binding to ligands, such as CD274/PDCD1L1 and CD273/PDCD1LG2. Following T-cell receptor (TCR) engagement, PDCD1 associates with CD3-TCR in the immunological synapse and directly inhibits T-cell activation. Suppresses T-cell activation through the recruitment of PTPN11/SHP-2: following ligand-binding, PDCD1 is phosphorylated within the ITSM motif, leading to the recruitment of the protein tyrosine phosphatase PTPN11/SHP-2 that mediates dephosphorylation of key TCR proximal signaling molecules, such as ZAP70, PRKCQ/PKCtheta and CD247/CD3zeta. The PDCD1-mediated inhibitory pathway is exploited by tumors to attenuate anti-tumor immunity and facilitate tumor survival. The sequence is that of Programmed cell death protein 1 from Mus musculus (Mouse).